Here is a 383-residue protein sequence, read N- to C-terminus: Probable cell wall hydrolase LytN (383 aa).

The signal sequence occupies residues 1–49 (MFVYYCKECFIMNKQQSKVRYSIRKVSIGILSISIGMFLALGMSNKAYA). The region spanning 175–219 (QIYTVKKGDTLSAIALKYKTTVSNIQNTNNIANPNLIFIGQKLKV) is the LysM domain. The region spanning 241 to 378 (NSSTLNYLKT…NYENDMIFIR (138 aa)) is the Peptidase C51 domain.

Its subcellular location is the secreted. In terms of biological role, probably involved in peptidoglycan hydrolysis. This Staphylococcus aureus (strain MSSA476) protein is Probable cell wall hydrolase LytN (lytN).